Here is a 359-residue protein sequence, read N- to C-terminus: E3 ubiquitin-protein ligase RNF146 (359 aa).

The RING-type zinc-finger motif lies at cysteine 36–arginine 74. Glycyl lysine isopeptide (Lys-Gly) (interchain with G-Cter in ubiquitin) cross-links involve residues lysine 84 and lysine 94. The WWE domain occupies glutamate 91–arginine 167. A glycoprotein contacts are provided by tyrosine 107, arginine 110, and tryptophan 114. Lysine 130 is covalently cross-linked (Glycyl lysine isopeptide (Lys-Gly) (interchain with G-Cter in ubiquitin)). A glycoprotein is bound by residues tyrosine 144, glutamine 153, arginine 163, and lysine 175. Residue lysine 175 forms a Glycyl lysine isopeptide (Lys-Gly) (interchain with G-Cter in ubiquitin) linkage. The tract at residues glutamate 259–valine 359 is disordered. The segment covering serine 284–aspartate 298 has biased composition (acidic residues). Residues serine 290 and serine 294 each carry the phosphoserine modification. Positions histidine 306 to valine 322 are enriched in polar residues.

As to quaternary structure, can form homooligomers. Interacts with PARsylated AXIN1, AXIN2, BLZF1, CASC3, H1-2, IPO7, LIG3, NCL, PARP1, XRCC1, XRCC5 and XRCC6. Interacts with DDB1, DHX15, IQGAP1, LRPPRC, PARP2, PRKDC, RUVBL2, TNKS1 and TNKS2. Binding often leads to interactor ubiquitination, in the presence of the appropriate E1 and E2 enzymes, and proteasomal degradation. Ubiquitinated; autoubiquitinated. Autoubiquitination is enhanced upon poly(ADP-ribose)-binding.

It is found in the cytoplasm. Its subcellular location is the cytosol. The protein resides in the nucleus. The enzyme catalyses S-ubiquitinyl-[E2 ubiquitin-conjugating enzyme]-L-cysteine + [acceptor protein]-L-lysine = [E2 ubiquitin-conjugating enzyme]-L-cysteine + N(6)-ubiquitinyl-[acceptor protein]-L-lysine.. It participates in protein modification; protein ubiquitination. Functionally, E3 ubiquitin-protein ligase that specifically binds poly-ADP-ribosylated (PARsylated) proteins and mediates their ubiquitination and subsequent degradation. May regulate many important biological processes, such as cell survival and DNA damage response. Acts as an activator of the Wnt signaling pathway by mediating the ubiquitination of PARsylated AXIN1 and AXIN2, 2 key components of the beta-catenin destruction complex. Acts in cooperation with tankyrase proteins (TNKS and TNKS2), which mediate PARsylation of target proteins AXIN1, AXIN2, BLZF1, CASC3, TNKS and TNKS2. Recognizes and binds tankyrase-dependent PARsylated proteins via its WWE domain and mediates their ubiquitination, leading to their degradation. Different ubiquitin linkage types have been observed: TNKS2 undergoes ubiquitination at 'Lys-48' and 'Lys-63', while AXIN1 is only ubiquitinated at 'Lys-48'. May regulate TNKS and TNKS2 subcellular location, preventing aggregation at a centrosomal location. Neuroprotective protein. Protects the brain against N-methyl-D-aspartate (NMDA) receptor-mediated glutamate excitotoxicity and ischemia, by interfering with PAR-induced cell death, called parthanatos. Prevents nuclear translocation of AIFM1 in a PAR-binding dependent manner. Does not affect PARP1 activation. Protects against cell death induced by DNA damaging agents, such as N-methyl-N-nitro-N-nitrosoguanidine (MNNG) and rescues cells from G1 arrest. Promotes cell survival after gamma-irradiation. Facilitates DNA repair. This chain is E3 ubiquitin-protein ligase RNF146 (RNF146), found in Ailuropoda melanoleuca (Giant panda).